Here is a 1084-residue protein sequence, read N- to C-terminus: Cellulose synthase A catalytic subunit 2 [UDP-forming] (1084 aa).

N-acetylmethionine is present on Met1. The Cytoplasmic portion of the chain corresponds to 1–278 (MNTGGRLIAG…RSSRINPYRM (278 aa)). The Zn(2+) site is built by Cys39, Cys42, Cys58, Cys61, Cys66, Cys69, Cys81, and Cys84. The segment at 39–85 (CQICGDEIELTVSSELFVACNECAFPVCRPCYEYERREGNQACPQCK) adopts an RING-type; degenerate zinc-finger fold. The disordered stretch occupies residues 230–259 (IKHEGGNNGRGSNDDDELDDPDMPMMDEGR). The helical transmembrane segment at 279–299 (LILCRLAILGLFFHYRILHPV) threads the bilayer. Topologically, residues 300 to 301 (ND) are extracellular. The chain crosses the membrane as a helical span at residues 302–322 (AYGLWLTSVICEIWFAVSWIL). Over 323-867 (DQFPKWYPIE…INSVVYPWTS (545 aa)) the chain is Cytoplasmic. The UDP-alpha-D-glucose site is built by Ser361, Lys367, Glu368, and Asp397. Asp397 is an active-site residue. The stretch at 451–477 (VRERRAMKRDYEEFKVKINALVATAQK) forms a coiled coil. Lys538 contacts UDP-alpha-D-glucose. Residues Lys539 and Asp563 each contribute to the Mn(2+) site. Residue Asp784 is part of the active site. The chain crosses the membrane as a helical span at residues 868 to 888 (LPLIVYCSLPAVCLLTGKFIV). The Extracellular segment spans residues 889-893 (PEISN). The helical transmembrane segment at 894–914 (YAGILFMLMFISIAVTGILEM) threads the bilayer. Over 915–929 (QWGGVGIDDWWRNEQ) the chain is Cytoplasmic. A helical membrane pass occupies residues 930-950 (FWVIGGASSHLFALFQGLLKV). Over 951–979 (LAGVNTNFTVTSKAADDGAFSELYIFKWT) the chain is Extracellular. Residue Asn957 is glycosylated (N-linked (GlcNAc...) asparagine). A helical membrane pass occupies residues 980–1000 (TLLIPPTTLLIINIIGVIVGV). Residues 1001 to 1011 (SDAISNGYDSW) are Cytoplasmic-facing. The helical transmembrane segment at 1012-1032 (GPLFGRLFFALWVIVHLYPFL) threads the bilayer. Residues 1033-1041 (KGMLGKQDK) are Extracellular-facing. Residues 1042 to 1062 (MPTIIVVWSILLASILTLLWV) traverse the membrane as a helical segment. Topologically, residues 1063–1084 (RVNPFVAKGGPVLEICGLNCGN) are cytoplasmic.

The protein belongs to the glycosyltransferase 2 family. Plant cellulose synthase subfamily. Homodimer. Interaction through zinc finger domain. Mn(2+) is required as a cofactor. Zn(2+) serves as cofactor. In terms of tissue distribution, strongly and ubiquitously expressed. Localized in some dividing and expanding cells, as well as in vascular tissues.

The protein localises to the cell membrane. It catalyses the reaction [(1-&gt;4)-beta-D-glucosyl](n) + UDP-alpha-D-glucose = [(1-&gt;4)-beta-D-glucosyl](n+1) + UDP + H(+). It functions in the pathway glycan metabolism; plant cellulose biosynthesis. In terms of biological role, catalytic subunit of cellulose synthase terminal complexes ('rosettes'), required for beta-1,4-glucan microfibril crystallization, a major mechanism of the cell wall formation. Involved in the primary cell wall formation. The polypeptide is Cellulose synthase A catalytic subunit 2 [UDP-forming] (Arabidopsis thaliana (Mouse-ear cress)).